The following is a 191-amino-acid chain: Ribosome maturation factor RimM (191 aa).

Residues 99–172 (TDEFYQIDLI…FLVVDPVAAG (74 aa)) enclose the PRC barrel domain.

It belongs to the RimM family. In terms of assembly, binds ribosomal protein uS19.

The protein resides in the cytoplasm. An accessory protein needed during the final step in the assembly of 30S ribosomal subunit, possibly for assembly of the head region. Essential for efficient processing of 16S rRNA. May be needed both before and after RbfA during the maturation of 16S rRNA. It has affinity for free ribosomal 30S subunits but not for 70S ribosomes. This Bartonella bacilliformis (strain ATCC 35685 / KC583 / Herrer 020/F12,63) protein is Ribosome maturation factor RimM.